A 118-amino-acid chain; its full sequence is Probable non-functional immunoglobulin lambda variable 2-33 (118 aa).

Residues 1-19 form the signal peptide; that stretch reads MAWALLLLTLLTQGTGSWA. The interval 20 to 44 is framework-1; that stretch reads QSALTQPPFVSGAPGQSVTISCTGT. Residues 34–118 form the Ig-like domain; that stretch reads GQSVTISCTG…CSLYSSSYTF (85 aa). The cysteines at positions 41 and 109 are disulfide-linked. The segment at 45–53 is complementarity-determining-1; that stretch reads SSDVGDYDH. Residues 54-70 form a framework-2 region; it reads VFWYQKRLSTTSRLLIY. A complementarity-determining-2 region spans residues 71–73; the sequence is NVN. The tract at residues 74–109 is framework-3; that stretch reads TRPSGISDLFSGSKSGNMASLTISGLKSEVEANYHC. The tract at residues 110-118 is complementarity-determining-3; sequence SLYSSSYTF.

In terms of assembly, immunoglobulins are composed of two identical heavy chains and two identical light chains; disulfide-linked.

The protein localises to the secreted. Its subcellular location is the cell membrane. Its function is as follows. Probable non-functional open reading frame (ORF) of V region of the variable domain of immunoglobulin light chains. Non-functional ORF generally cannot participate in the synthesis of a productive immunoglobulin chain due to altered V-(D)-J or switch recombination and/or splicing site (at mRNA level) and/or conserved amino acid change (protein level). Immunoglobulins, also known as antibodies, are membrane-bound or secreted glycoproteins produced by B lymphocytes. In the recognition phase of humoral immunity, the membrane-bound immunoglobulins serve as receptors which, upon binding of a specific antigen, trigger the clonal expansion and differentiation of B lymphocytes into immunoglobulins-secreting plasma cells. Secreted immunoglobulins mediate the effector phase of humoral immunity, which results in the elimination of bound antigens. The antigen binding site is formed by the variable domain of one heavy chain, together with that of its associated light chain. Thus, each immunoglobulin has two antigen binding sites with remarkable affinity for a particular antigen. The variable domains are assembled by a process called V-(D)-J rearrangement and can then be subjected to somatic hypermutations which, after exposure to antigen and selection, allow affinity maturation for a particular antigen. The protein is Probable non-functional immunoglobulin lambda variable 2-33 of Homo sapiens (Human).